The chain runs to 302 residues: 4-hydroxy-tetrahydrodipicolinate synthase (302 aa).

Threonine 55 serves as a coordination point for pyruvate. Residue tyrosine 144 is the Proton donor/acceptor of the active site. Lysine 172 serves as the catalytic Schiff-base intermediate with substrate. Valine 214 contributes to the pyruvate binding site.

The protein belongs to the DapA family. As to quaternary structure, homotetramer; dimer of dimers.

The protein resides in the cytoplasm. It carries out the reaction L-aspartate 4-semialdehyde + pyruvate = (2S,4S)-4-hydroxy-2,3,4,5-tetrahydrodipicolinate + H2O + H(+). Its pathway is amino-acid biosynthesis; L-lysine biosynthesis via DAP pathway; (S)-tetrahydrodipicolinate from L-aspartate: step 3/4. In terms of biological role, catalyzes the condensation of (S)-aspartate-beta-semialdehyde [(S)-ASA] and pyruvate to 4-hydroxy-tetrahydrodipicolinate (HTPA). The chain is 4-hydroxy-tetrahydrodipicolinate synthase from Synechococcus sp. (strain CC9605).